A 171-amino-acid polypeptide reads, in one-letter code: RxLR effector protein CRE7 (171 aa).

The first 23 residues, 1 to 23 (MRAIAILLAVVATIFASLHGVSA), serve as a signal peptide directing secretion. The short motif at 46–59 (RRLRQTGDASDEER) is the RxLR-dEER element.

This sequence belongs to the RxLR effector family.

It localises to the secreted. The protein resides in the host cell. Effector that is involved in host plant infection. Contributes to virulence during the early infection stage, by inhibiting plant defense responses induced by both PAMP-triggered immunity (PTI) and effector-triggered immunity (ETI). The sequence is that of RxLR effector protein CRE7 from Phytophthora infestans (strain T30-4) (Potato late blight agent).